We begin with the raw amino-acid sequence, 530 residues long: Hyalin (530 aa).

7 consecutive HYR domains span residues 1–66 (NVEI…TVTA), 67–150 (TDSI…NVVE), 151–234 (VDTT…NVVE), 235–319 (VDTT…NVVE), 320–403 (VDTT…NIVE), 404–486 (EDTT…TVNT), and 487–530 (VDTT…ASLV).

In terms of assembly, homooligomer in presence of calcium. Glycosylated.

The protein localises to the secreted. It is found in the extracellular space. It localises to the extracellular matrix. Major constituent of the hyaline layer. The hyaline layer of echinoderm embryos is an extraembryonic matrix that functions as a substrate for cell adhesion through early development. The chain is Hyalin from Lytechinus variegatus (Green sea urchin).